The sequence spans 458 residues: Dihydrolipoyl dehydrogenase (458 aa).

Residues 30–38, Lys47, and Ala112 each bind FAD; that span reads DKGKLGGTC. Cys38 and Cys43 form a disulfide bridge. NAD(+) contacts are provided by residues 177–181, Glu200, and 263–266; these read GGGVI and AIGR. Residues Asp305 and Ala313 each contribute to the FAD site. His437 functions as the Proton acceptor in the catalytic mechanism.

The protein belongs to the class-I pyridine nucleotide-disulfide oxidoreductase family. As to quaternary structure, homodimer. The cofactor is FAD.

It is found in the cytoplasm. The catalysed reaction is N(6)-[(R)-dihydrolipoyl]-L-lysyl-[protein] + NAD(+) = N(6)-[(R)-lipoyl]-L-lysyl-[protein] + NADH + H(+). It functions in the pathway ketone degradation; acetoin degradation. This chain is Dihydrolipoyl dehydrogenase (acoL), found in Bacillus subtilis (strain 168).